The chain runs to 62 residues: GKEGYPADSKGCKVTCFFTGVGYCDTECKLKKASSGYCAWPACYCYGLPDSASVWDSATNKC.

An LCN-type CS-alpha/beta domain is found at 2-62 (KEGYPADSKG…SVWDSATNKC (61 aa)). Cystine bridges form between cysteine 12–cysteine 62, cysteine 16–cysteine 38, cysteine 24–cysteine 43, and cysteine 28–cysteine 45. At cysteine 62 the chain carries Cysteine amide.

In terms of tissue distribution, expressed by the venom gland.

Its subcellular location is the secreted. Its function is as follows. Alpha toxins bind voltage-independently at site-3 of sodium channels (Nav) and inhibit the inactivation of the activated channels, thereby blocking neuronal transmission. This toxin is toxic to frogs but non-toxic to insect larvae (T.molitor), mammals (rats) and crustaceans (crabs) at the doses assayed. This chain is Alpha-toxin Tf4, found in Tityus fasciolatus (Central Brazilian scorpion).